We begin with the raw amino-acid sequence, 284 residues long: MGEIIDGKKLAKEIQEKVTREVAELVKEGKKPGLAVVLVGDNQASRTYVRNKQKRTEEAGMKSVLIELPENVTEEKLLSVVEELNEDKTIHGILVQLPLPEHISEEKVIDTISYDKDVDGFHPVNVGNLFIGKDSFVPCTPAGIIELIKSTGTQIEGKRAVVIGRSNIVGKPVAQLLLNENATVTIAHSRTKDLPQVAKEADILVVATGLAKFVKKDYIKPGAIVIDVGMDRDENNKLCGDVDFDDVVEEAGFITPVPGGVGPMTITMLLANTLKAAKRIWKMN.

NADP(+) contacts are provided by residues 164 to 166 (GRS) and serine 189.

It belongs to the tetrahydrofolate dehydrogenase/cyclohydrolase family. Homodimer.

It catalyses the reaction (6R)-5,10-methylene-5,6,7,8-tetrahydrofolate + NADP(+) = (6R)-5,10-methenyltetrahydrofolate + NADPH. It carries out the reaction (6R)-5,10-methenyltetrahydrofolate + H2O = (6R)-10-formyltetrahydrofolate + H(+). It functions in the pathway one-carbon metabolism; tetrahydrofolate interconversion. In terms of biological role, catalyzes the oxidation of 5,10-methylenetetrahydrofolate to 5,10-methenyltetrahydrofolate and then the hydrolysis of 5,10-methenyltetrahydrofolate to 10-formyltetrahydrofolate. The protein is Bifunctional protein FolD of Listeria monocytogenes serotype 4a (strain HCC23).